We begin with the raw amino-acid sequence, 561 residues long: Protein NRT1/ PTR FAMILY 5.13 (561 aa).

A helical transmembrane segment spans residues 78-98; the sequence is AWSGISTILPLLGAFVADAFL. The residue at position 103 (Thr103) is a Phosphothreonine. The next 10 membrane-spanning stretches (helical) occupy residues 104-124, 133-153, 183-203, 211-231, 324-344, 361-381, 405-425, 447-467, 486-506, and 530-550; these read IIIA…SAFL, SSPS…VAIG, FFNW…LVVV, WALG…LFVL, IPVW…MTFF, IPPA…VPIY, IGTG…VESK, IWWL…TLVG, AIYL…IYLI, and YFYW…LFIS.

This sequence belongs to the major facilitator superfamily. Proton-dependent oligopeptide transporter (POT/PTR) (TC 2.A.17) family. In terms of tissue distribution, expressed in roots, flowers and siliques. Detected in stems and leaves.

The protein resides in the membrane. The sequence is that of Protein NRT1/ PTR FAMILY 5.13 (NPF5.13) from Arabidopsis thaliana (Mouse-ear cress).